Reading from the N-terminus, the 122-residue chain is Cytochrome b-c1 complex subunit 7-2, mitochondrial (122 aa).

The protein belongs to the UQCRB/QCR7 family. As to quaternary structure, component of the ubiquinol-cytochrome c oxidoreductase (cytochrome b-c1 complex, complex III, CIII), a multisubunit enzyme composed of 10 subunits. The complex is composed of 3 respiratory subunits cytochrome b (MT-CYB), cytochrome c1 (CYC1-1 or CYC1-2) and Rieske protein (UCR1-1 or UCR1-2), 2 core protein subunits MPPalpha1 (or MPPalpha2) and MPPB, and 5 low-molecular weight protein subunits QCR7-1 (or QCR7-2), UCRQ-1 (or UCRQ-2), QCR9, UCRY and probably QCR6-1 (or QCR6-2). The complex exists as an obligatory dimer and forms supercomplexes (SCs) in the inner mitochondrial membrane with NADH-ubiquinone oxidoreductase (complex I, CI), resulting in different assemblies (supercomplexes SCI(1)III(2) and SCI(2)III(4)).

Its subcellular location is the mitochondrion inner membrane. Component of the ubiquinol-cytochrome c oxidoreductase, a multisubunit transmembrane complex that is part of the mitochondrial electron transport chain which drives oxidative phosphorylation. The respiratory chain contains 3 multisubunit complexes succinate dehydrogenase (complex II, CII), ubiquinol-cytochrome c oxidoreductase (cytochrome b-c1 complex, complex III, CIII) and cytochrome c oxidase (complex IV, CIV), that cooperate to transfer electrons derived from NADH and succinate to molecular oxygen, creating an electrochemical gradient over the inner membrane that drives transmembrane transport and the ATP synthase. The cytochrome b-c1 complex catalyzes electron transfer from ubiquinol to cytochrome c, linking this redox reaction to translocation of protons across the mitochondrial inner membrane, with protons being carried across the membrane as hydrogens on the quinol. In the process called Q cycle, 2 protons are consumed from the matrix, 4 protons are released into the intermembrane space and 2 electrons are passed to cytochrome c. The polypeptide is Cytochrome b-c1 complex subunit 7-2, mitochondrial (QCR7-2) (Arabidopsis thaliana (Mouse-ear cress)).